The following is a 220-amino-acid chain: Deoxyribose-phosphate aldolase (220 aa).

Aspartate 89 functions as the Proton donor/acceptor in the catalytic mechanism. Lysine 150 acts as the Schiff-base intermediate with acetaldehyde in catalysis. Residue lysine 182 is the Proton donor/acceptor of the active site.

Belongs to the DeoC/FbaB aldolase family. DeoC type 1 subfamily.

It is found in the cytoplasm. It catalyses the reaction 2-deoxy-D-ribose 5-phosphate = D-glyceraldehyde 3-phosphate + acetaldehyde. Its pathway is carbohydrate degradation; 2-deoxy-D-ribose 1-phosphate degradation; D-glyceraldehyde 3-phosphate and acetaldehyde from 2-deoxy-alpha-D-ribose 1-phosphate: step 2/2. Catalyzes a reversible aldol reaction between acetaldehyde and D-glyceraldehyde 3-phosphate to generate 2-deoxy-D-ribose 5-phosphate. This chain is Deoxyribose-phosphate aldolase, found in Mycoplasmoides pirum (Mycoplasma pirum).